A 321-amino-acid chain; its full sequence is Glycerol-3-phosphate phosphatase (321 aa).

Asp-34 functions as the Nucleophile in the catalytic mechanism. Asp-34, Asp-36, and Asp-260 together coordinate Mg(2+). The active-site Proton donor is the Asp-36.

The protein belongs to the HAD-like hydrolase superfamily. CbbY/CbbZ/Gph/YieH family. In terms of assembly, homodimer. Mg(2+) serves as cofactor. In terms of tissue distribution, detected in all tissues including red cells, lymphocytes and cultured fibroblasts (at protein level). The highest activities occur in skeletal muscle and cardiac muscle.

The catalysed reaction is O-phospho-L-tyrosyl-[protein] + H2O = L-tyrosyl-[protein] + phosphate. The enzyme catalyses sn-glycerol 1-phosphate + H2O = glycerol + phosphate. It carries out the reaction sn-glycerol 3-phosphate + H2O = glycerol + phosphate. In terms of biological role, glycerol-3-phosphate phosphatase hydrolyzing glycerol-3-phosphate into glycerol. Thereby, regulates the cellular levels of glycerol-3-phosphate a metabolic intermediate of glucose, lipid and energy metabolism. Was also shown to have a 2-phosphoglycolate phosphatase activity and a tyrosine-protein phosphatase activity. However, their physiological relevance is unclear. In vitro, also has a phosphatase activity toward ADP, ATP, GDP and GTP. The sequence is that of Glycerol-3-phosphate phosphatase from Homo sapiens (Human).